The sequence spans 207 residues: Ras-related protein Rab-8B (207 aa).

GTP is bound by residues Ser-17, Gly-18, Val-19, Gly-20, Lys-21, Thr-22, Cys-23, Thr-35, Ser-39, and Thr-40. Thr-22 serves as a coordination point for Mg(2+). 2 consecutive short sequence motifs (switch) follow at residues 31–45 and 63–80; these read DAFN…GIDF and DTAG…YYRG. The Mg(2+) site is built by Thr-40 and Asp-63. Gly-66 serves as a coordination point for GTP. Thr-72 is modified (phosphothreonine; by LRRK2). Residues Asn-121, Lys-122, Asp-124, Ala-152, and Lys-153 each contribute to the GTP site. Phosphoserine occurs at positions 180 and 183. Cys-204 bears the Cysteine methyl ester mark. Residue Cys-204 is the site of S-geranylgeranyl cysteine attachment. Residues 205–207 constitute a propeptide, removed in mature form; it reads SLL.

Belongs to the small GTPase superfamily. Rab family. As to quaternary structure, associated with actin, delta-catenin and alpha and beta tubulins. Interacts with OTOF. Interacts with PEX5R. Interacts with RAB3IP. Interacts with VIM. Interacts with CDH1. Interacts with MICALL2. Interacts with GDI1, GDI2, CHML and CHM; phosphorylation at Thr-72 disrupts these interactions. Interacts with MICAL1. It depends on Mg(2+) as a cofactor. In terms of processing, phosphorylation of Thr-72 in the switch II region by LRRK2 prevents the association of RAB regulatory proteins, including CHM, CHML and RAB GDP dissociation inhibitors GDI1 and GDI2.

The protein resides in the cell membrane. It localises to the cytoplasmic vesicle. The protein localises to the phagosome membrane. Its subcellular location is the endosome membrane. The catalysed reaction is GTP + H2O = GDP + phosphate + H(+). Regulated by guanine nucleotide exchange factors (GEFs) including RAB3IP/RABIN8 which promotes the exchange of bound GDP for free GTP. Regulated by GTPase activating proteins (GAPs) which increase the GTP hydrolysis activity. Inhibited by GDP dissociation inhibitors (GDIs). In terms of biological role, the small GTPases Rab are key regulators of intracellular membrane trafficking, from the formation of transport vesicles to their fusion with membranes. Rabs cycle between an inactive GDP-bound form and an active GTP-bound form that is able to recruit to membranes different sets of downstream effectors directly responsible for vesicle formation, movement, tethering and fusion. RAB8B may be involved in polarized vesicular trafficking and neurotransmitter release. May participate in cell junction dynamics in Sertoli cells. May also participate in the export of a subset of neosynthesized proteins through a Rab8-Rab10-Rab11-dependent endososomal export route. In Mus musculus (Mouse), this protein is Ras-related protein Rab-8B.